The chain runs to 347 residues: Sesquiterpene synthase M422DRAFT_47084 (347 aa).

Mg(2+)-binding residues include aspartate 93, asparagine 228, serine 232, and glutamate 236. Residues 93-97 (DEYTD) carry the DDXXD motif motif. (2E,6E)-farnesyl diphosphate-binding residues include arginine 318 and tyrosine 319.

It belongs to the terpene synthase family. It depends on Mg(2+) as a cofactor.

The enzyme catalyses (2E,6E)-farnesyl diphosphate = viridiflorene + diphosphate. Its function is as follows. Terpene cyclase that catalyzes the cyclization of farnesyl diphosphate (FPP) to viridiflorene and viridiflorol. The protein is Sesquiterpene synthase M422DRAFT_47084 of Sphaerobolus stellatus (strain SS14).